The following is a 1270-amino-acid chain: ATP-dependent helicase/nuclease subunit A (1270 aa).

The UvrD-like helicase ATP-binding domain occupies 3–476 (TKWTEEQELA…IMLYKNFRSR (474 aa)). 24 to 31 (AAAGSGKT) is a binding site for ATP. Positions 528–823 (IENLKVAGDI…RIMSIHKSKG (296 aa)) constitute a UvrD-like helicase C-terminal domain.

The protein belongs to the helicase family. AddA subfamily. As to quaternary structure, heterodimer of AddA and AddB/RexB. Requires Mg(2+) as cofactor.

It carries out the reaction Couples ATP hydrolysis with the unwinding of duplex DNA by translocating in the 3'-5' direction.. The enzyme catalyses ATP + H2O = ADP + phosphate + H(+). The heterodimer acts as both an ATP-dependent DNA helicase and an ATP-dependent, dual-direction single-stranded exonuclease. Recognizes the chi site generating a DNA molecule suitable for the initiation of homologous recombination. The AddA nuclease domain is required for chi fragment generation; this subunit has the helicase and 3' -&gt; 5' nuclease activities. This chain is ATP-dependent helicase/nuclease subunit A, found in Clostridium perfringens (strain SM101 / Type A).